A 671-amino-acid chain; its full sequence is Gametogenetin-binding protein 2-like (671 aa).

Disordered stretches follow at residues 372-489 (REQK…ARVQ) and 532-562 (VRDS…SEVS). A compositionally biased stretch (basic residues) spans 373 to 384 (EQKKLKKKKKKD). Over residues 385 to 395 (EKKNLLHRQCD) the composition is skewed to basic and acidic residues. Over residues 396 to 420 (DTEANESDEEEEELRNEELDLEEES) the composition is skewed to acidic residues. The segment covering 455-472 (TKSKPKKQSKKKKQKKAA) has biased composition (basic residues). 2 stretches are compositionally biased toward polar residues: residues 476 to 486 (MGNQKQMQATA) and 546 to 557 (GSRTSSAISSPE).

The polypeptide is Gametogenetin-binding protein 2-like (Drosophila melanogaster (Fruit fly)).